Reading from the N-terminus, the 292-residue chain is Zinc finger protein OZF (292 aa).

10 consecutive C2H2-type zinc fingers follow at residues 16–38 (FACK…EHFH), 44–66 (FECN…QSTH), 72–94 (FECS…QKIH), 100–122 (FECK…QRTH), 128–150 (FICK…EKIH), 156–178 (FKCN…QNIH), 184–206 (YECN…VRIH), 212–234 (YECN…VRSH), 240–262 (YGCN…LRIH), and 268–290 (YQCS…QKIH). Residues Lys-28, Lys-51, and Lys-56 each participate in a glycyl lysine isopeptide (Lys-Gly) (interchain with G-Cter in SUMO2) cross-link. Residues Lys-157 and Lys-169 each participate in a glycyl lysine isopeptide (Lys-Gly) (interchain with G-Cter in SUMO) cross-link. A Glycyl lysine isopeptide (Lys-Gly) (interchain with G-Cter in SUMO2) cross-link involves residue Lys-173. The segment at 212 to 292 (YECNVCGKAF…HIRHQKIHTH (81 aa)) is interaction with TERF2IP.

This sequence belongs to the krueppel C2H2-type zinc-finger protein family. Binds DNA. Interacts with SUMO conjugating enzyme UBC9/UBE2I. Interacts with the telomeric protein TERF2IP. As to expression, expressed in heart, brain, liver, lung, skeletal muscle and kidney, and at much lower level in spleen and testicle. Expressed in lactating mammary gland.

The protein localises to the nucleus. This chain is Zinc finger protein OZF (Znf146), found in Mus musculus (Mouse).